Consider the following 278-residue polypeptide: MANYTAADVKKLRELTGAGMMDCKKALDEAEGNVEKAVEALRIKGQKGVAKREGRSAENGAVVSVIADDNASGVLVELKCETDFVAKGEKFQAAANAIAEHVAKTAPADLEALLASEIEPGKTVQAFVDEANANLGEKIVLDRFAAYADGYVSAYMHRTMPDLPPQIGVLVELDKPNAEIAKGVAQHIAAFAPKYLSKEDVPAEVVESERRVAEETTRAEGKPEAALPKIVEGRLNGFFKDATLLGQPYALDNKKSVQKVLDEAGVTLKRFTRIKVGI.

Positions 82 to 85 (TDFV) are involved in Mg(2+) ion dislocation from EF-Tu.

It belongs to the EF-Ts family.

It localises to the cytoplasm. In terms of biological role, associates with the EF-Tu.GDP complex and induces the exchange of GDP to GTP. It remains bound to the aminoacyl-tRNA.EF-Tu.GTP complex up to the GTP hydrolysis stage on the ribosome. This Streptomyces avermitilis (strain ATCC 31267 / DSM 46492 / JCM 5070 / NBRC 14893 / NCIMB 12804 / NRRL 8165 / MA-4680) protein is Elongation factor Ts.